Here is an 867-residue protein sequence, read N- to C-terminus: GATOR2 complex protein Mio (867 aa).

WD repeat units lie at residues 51 to 86 (ANES…GICN), 100 to 144 (RQQR…PKET), 149 to 188 (GVGE…ATCQ), 190 to 228 (IQTK…SPLR), and 231 to 272 (QSSK…TDNS). Residues 350–376 (PASPTSTAATPTQQQPTSSCSTNSGSS) show a composition bias toward low complexity. Residues 350–378 (PASPTSTAATPTQQQPTSSCSTNSGSSLD) form a disordered region. The segment at 739–777 (LSCNFCGKSVSNALLDEPRPRSTTTSTNRLSSCPSCRKP) adopts a C4-type zinc-finger fold. Cys741, Cys744, Cys771, Cys774, Cys784, Cys821, Cys824, His826, His829, His832, Cys843, Cys848, and Cys852 together coordinate Zn(2+). Residues 778-857 (LPRCSLCLMH…CNCRCFDMDG (80 aa)) form an RING-type; atypical zinc finger.

It belongs to the WD repeat mio family. Component of the GATOR complex consisting of mio, Nup44A/Seh1, Im11, Nplr3, Nplr2, Wdr24, Wdr59 and Sec13. Within the GATOR complex, probable component of the GATOR2 subcomplex which is likely composed of mio, Nup44A/Seh1, Wdr24, Wdr59 and Sec13. Interacts with Wdr24. Interacts with nucleoporin Nup44A/Seh1. The GATOR2 complex associates with unmet in the absence of S-adenosyl-L-methionine; the mio-Wdr24-Nup44A subcomplex is essential and sufficient for this interaction while Wdr59 and Sec13 are dispensable. This association acts as a nutrient sensor to inhibit mTORC1 signaling in the absence of methionine. In terms of tissue distribution, present in the oocyte.

The protein resides in the nucleus. The protein localises to the lysosome. Functionally, an essential component of the GATOR subcomplex GATOR2 which functions as an activator of the amino acid-sensing branch of the mTORC1 signaling pathway. The two GATOR subcomplexes, GATOR1 and GATOR2, regulate the mTORC1 pathway in order to mediate metabolic homeostasis, female gametogenesis and the response to amino acid limitation and complete starvation. GATOR2 activates the mTORC1 signaling pathway through the inhibition of the GATOR1 subcomplex, controlling the switch to cell proliferation and growth under nutrient replete conditions and during female oocyte development. This component is required for activating mTORC1 specifically in germline cells to promote cell growth and maintain the oocyte fate. GATOR1 and GATOR2 act at different stages of oogenesis to regulate mTORC1 in order to control meiotic entry and promote oocyte growth and development. After exactly four mitotic cyst divisions, the GATOR1 complex members (Iml1, Nprl2 and Nprl3) down-regulate mTORC1 to slow cellular metabolism and promote the mitotic/meiotic transition. At later stages of oogenesis, the mio and Nup44A components of the GATOR2 complex inhibit GATOR1 and thus activate mTORC1 to promote meiotic progression, and drive oocyte growth and development. In addition to its role in the regulation of the mTORC1 complex, functions independently of mTORC1 to prevent the inappropriate accumulation of autolysosomes in germline tissues. The protein is GATOR2 complex protein Mio of Drosophila melanogaster (Fruit fly).